The primary structure comprises 70 residues: Large ribosomal subunit protein eL38 (70 aa).

Lysine 4 is covalently cross-linked (Glycyl lysine isopeptide (Lys-Gly) (interchain with G-Cter in SUMO2)). Lysine 9 is modified (N6-acetyllysine; alternate). A Glycyl lysine isopeptide (Lys-Gly) (interchain with G-Cter in SUMO2); alternate cross-link involves residue lysine 9. Lysine 67 carries the N6-acetyllysine modification.

This sequence belongs to the eukaryotic ribosomal protein eL38 family. As to quaternary structure, component of the large ribosomal subunit.

It is found in the cytoplasm. Component of the large ribosomal subunit. The ribosome is a large ribonucleoprotein complex responsible for the synthesis of proteins in the cell. The polypeptide is Large ribosomal subunit protein eL38 (Rpl38) (Mus musculus (Mouse)).